An 841-amino-acid polypeptide reads, in one-letter code: Auxin response factor 24 (841 aa).

Residues 109–140 (LPEKQQDGNGSGNGNVSKDKVEEEEVVPPAAT) form a disordered region. Positions 148–250 (FCKTLTASDT…ELRVGVRRAM (103 aa)) form a DNA-binding region, TF-B3. 3 disordered regions span residues 366–397 (PRPD…KRAR), 663–715 (QDAL…SRSC), and 804–841 (GALN…SENC). Residues 684-695 (AQHDSAREKHQS) show a composition bias toward basic and acidic residues. Polar residues-rich tracts occupy residues 701–713 (KNIQ…GSSR) and 830–841 (GLSTPSLNSENC). Positions 713–797 (RSCKKVHKQG…HKIFIYTREE (85 aa)) constitute a PB1 domain.

It belongs to the ARF family. Homodimers and heterodimers. As to expression, expressed in roots, culms, leaves and young panicles.

It localises to the nucleus. In terms of biological role, auxin response factors (ARFs) are transcriptional factors that bind specifically to the DNA sequence 5'-TGTCTC-3' found in the auxin-responsive promoter elements (AuxREs). The polypeptide is Auxin response factor 24 (ARF24) (Oryza sativa subsp. japonica (Rice)).